The following is a 377-amino-acid chain: Chaperone protein DnaJ (377 aa).

Positions 4-69 (DYYEALGVTR…QKRAAYDRFG (66 aa)) constitute a J domain. A CR-type zinc finger spans residues 135–213 (GKTAQIRVPT…CHGQGRVTQE (79 aa)). The Zn(2+) site is built by Cys-148, Cys-151, Cys-165, Cys-168, Cys-187, Cys-190, Cys-201, and Cys-204. CXXCXGXG motif repeat units follow at residues 148 to 155 (CDECSGSG), 165 to 172 (CTMCSGSG), 187 to 194 (CPGCNGRG), and 201 to 208 (CEKCHGQG).

Belongs to the DnaJ family. Homodimer. Requires Zn(2+) as cofactor.

Its subcellular location is the cytoplasm. Its function is as follows. Participates actively in the response to hyperosmotic and heat shock by preventing the aggregation of stress-denatured proteins and by disaggregating proteins, also in an autonomous, DnaK-independent fashion. Unfolded proteins bind initially to DnaJ; upon interaction with the DnaJ-bound protein, DnaK hydrolyzes its bound ATP, resulting in the formation of a stable complex. GrpE releases ADP from DnaK; ATP binding to DnaK triggers the release of the substrate protein, thus completing the reaction cycle. Several rounds of ATP-dependent interactions between DnaJ, DnaK and GrpE are required for fully efficient folding. Also involved, together with DnaK and GrpE, in the DNA replication of plasmids through activation of initiation proteins. The chain is Chaperone protein DnaJ from Brucella abortus (strain S19).